The chain runs to 75 residues: ATP synthase subunit 9, mitochondrial (75 aa).

2 consecutive transmembrane segments (helical) span residues 10 to 30 and 55 to 75; these read LVLG…GILF and FALV…VYFI.

The protein belongs to the ATPase C chain family. As to quaternary structure, F-type ATPases have 2 components, CF(1) - the catalytic core - and CF(0) - the membrane proton channel. CF(1) has five subunits: alpha(3), beta(3), gamma(1), delta(1), epsilon(1). CF(0) has three main subunits: a, b and c.

The protein resides in the mitochondrion membrane. Mitochondrial membrane ATP synthase (F(1)F(0) ATP synthase or Complex V) produces ATP from ADP in the presence of a proton gradient across the membrane which is generated by electron transport complexes of the respiratory chain. F-type ATPases consist of two structural domains, F(1) - containing the extramembraneous catalytic core and F(0) - containing the membrane proton channel, linked together by a central stalk and a peripheral stalk. During catalysis, ATP synthesis in the catalytic domain of F(1) is coupled via a rotary mechanism of the central stalk subunits to proton translocation. Part of the complex F(0) domain. A homomeric c-ring of probably 10 subunits is part of the complex rotary element. The chain is ATP synthase subunit 9, mitochondrial (ATP9) from Paramecium tetraurelia.